A 436-amino-acid polypeptide reads, in one-letter code: Enolase (436 aa).

Gln-167 is a binding site for (2R)-2-phosphoglycerate. Glu-209 functions as the Proton donor in the catalytic mechanism. Mg(2+)-binding residues include Asp-246, Glu-291, and Asp-318. 4 residues coordinate (2R)-2-phosphoglycerate: Lys-343, Arg-372, Ser-373, and Lys-394. The active-site Proton acceptor is Lys-343.

The protein belongs to the enolase family. In terms of assembly, component of the RNA degradosome, a multiprotein complex involved in RNA processing and mRNA degradation. Mg(2+) is required as a cofactor.

It localises to the cytoplasm. The protein resides in the secreted. Its subcellular location is the cell surface. The enzyme catalyses (2R)-2-phosphoglycerate = phosphoenolpyruvate + H2O. Its pathway is carbohydrate degradation; glycolysis; pyruvate from D-glyceraldehyde 3-phosphate: step 4/5. Its function is as follows. Catalyzes the reversible conversion of 2-phosphoglycerate (2-PG) into phosphoenolpyruvate (PEP). It is essential for the degradation of carbohydrates via glycolysis. This is Enolase from Actinobacillus pleuropneumoniae serotype 3 (strain JL03).